Here is a 132-residue protein sequence, read N- to C-terminus: Interleukin-13 (132 aa).

The signal sequence occupies residues Met1–Ala18. N-linked (GlcNAc...) asparagine glycans are attached at residues Asn38, Asn49, Asn57, and Asn72. 2 disulfide bridges follow: Cys48–Cys76 and Cys64–Cys90.

The protein belongs to the IL-4/IL-13 family. Interacts with IL13RA2.

Its subcellular location is the secreted. In terms of biological role, cytokine that plays important roles in allergic inflammation and immune response to parasite infection. Synergizes with IL2 in regulating interferon-gamma synthesis. Stimulates B-cell proliferation, and activation of eosinophils, basophils, and mast cells. Plays an important role in controlling IL33 activity by modulating the production of transmembrane and soluble forms of interleukin-1 receptor-like 1/IL1RL1. Displays the capacity to antagonize Th1-driven proinflammatory immune response and downregulates synthesis of many proinflammatory cytokines including IL1, IL6, IL10, IL12 and TNF-alpha through a mechanism that partially involves suppression of NF-kappa-B. Also functions on nonhematopoietic cells, including endothelial cells where it induces vascular cell adhesion protein 1/VCAM1, which is important in the recruitment of eosinophils. Exerts its biological effects through its receptors which comprises the IL4R chain and the IL13RA1 chain, to activate JAK1 and TYK2, leading to the activation of STAT6. Aside from IL13RA1, another receptor IL13RA2 acts as a high affinity decoy for IL13 and mediates internalization and depletion of extracellular IL13. The sequence is that of Interleukin-13 (IL13) from Macaca thibetana (Pere David's macaque).